Consider the following 257-residue polypeptide: Pantothenate synthetase (257 aa).

29–36 (MGNLHAGH) lines the ATP pocket. The active-site Proton donor is the His-36. Gln-60 lines the (R)-pantoate pocket. Gln-60 is a binding site for beta-alanine. 145–148 (GEKD) contributes to the ATP binding site. Gln-151 contacts (R)-pantoate. Residues Val-174 and 182–185 (LSSR) contribute to the ATP site.

It belongs to the pantothenate synthetase family. As to quaternary structure, homodimer.

The protein localises to the cytoplasm. It catalyses the reaction (R)-pantoate + beta-alanine + ATP = (R)-pantothenate + AMP + diphosphate + H(+). It participates in cofactor biosynthesis; (R)-pantothenate biosynthesis; (R)-pantothenate from (R)-pantoate and beta-alanine: step 1/1. Its function is as follows. Catalyzes the condensation of pantoate with beta-alanine in an ATP-dependent reaction via a pantoyl-adenylate intermediate. The protein is Pantothenate synthetase of Coxiella burnetii (strain Dugway 5J108-111).